The primary structure comprises 404 residues: Flavohemoprotein (404 aa).

The region spanning 1–138 (MLSEQTRSLV…LADTLIGIEN (138 aa)) is the Globin domain. His85 provides a ligand contact to heme b. Active-site charge relay system residues include Tyr95 and Glu137. A reductase region spans residues 149-404 (GGWSGWRPFR…EVFGSHPGDD (256 aa)). The FAD-binding FR-type domain occupies 152-263 (SGWRPFRVAK…SAPQGDFFLH (112 aa)). FAD-binding positions include Tyr190 and 206–209 (RQYS). An NADP(+)-binding site is contributed by 276–281 (GVGQTP). An FAD-binding site is contributed by 396–399 (VFGS).

It belongs to the globin family. Two-domain flavohemoproteins subfamily. In the C-terminal section; belongs to the flavoprotein pyridine nucleotide cytochrome reductase family. Heme b is required as a cofactor. The cofactor is FAD.

The enzyme catalyses 2 nitric oxide + NADPH + 2 O2 = 2 nitrate + NADP(+) + H(+). It carries out the reaction 2 nitric oxide + NADH + 2 O2 = 2 nitrate + NAD(+) + H(+). Its function is as follows. Is involved in NO detoxification in an aerobic process, termed nitric oxide dioxygenase (NOD) reaction that utilizes O(2) and NAD(P)H to convert NO to nitrate, which protects the bacterium from various noxious nitrogen compounds. Therefore, plays a central role in the inducible response to nitrosative stress. In Chromobacterium violaceum (strain ATCC 12472 / DSM 30191 / JCM 1249 / CCUG 213 / NBRC 12614 / NCIMB 9131 / NCTC 9757 / MK), this protein is Flavohemoprotein.